A 475-amino-acid polypeptide reads, in one-letter code: Sulfate adenylyltransferase subunit 1 (475 aa).

Positions 25–239 (KSLLRFLTCG…EVLETVEIQR (215 aa)) constitute a tr-type G domain. Positions 34–41 (GSVDDGKS) are G1. GTP is bound at residue 34-41 (GSVDDGKS). Positions 92-96 (GITID) are G2. A G3 region spans residues 113-116 (DTPG). GTP-binding positions include 113–117 (DTPGH) and 168–171 (NKMD). The G4 stretch occupies residues 168 to 171 (NKMD). A G5 region spans residues 206 to 208 (SAL).

This sequence belongs to the TRAFAC class translation factor GTPase superfamily. Classic translation factor GTPase family. CysN/NodQ subfamily. Heterodimer composed of CysD, the smaller subunit, and CysN.

It carries out the reaction sulfate + ATP + H(+) = adenosine 5'-phosphosulfate + diphosphate. Its pathway is sulfur metabolism; hydrogen sulfide biosynthesis; sulfite from sulfate: step 1/3. In terms of biological role, with CysD forms the ATP sulfurylase (ATPS) that catalyzes the adenylation of sulfate producing adenosine 5'-phosphosulfate (APS) and diphosphate, the first enzymatic step in sulfur assimilation pathway. APS synthesis involves the formation of a high-energy phosphoric-sulfuric acid anhydride bond driven by GTP hydrolysis by CysN coupled to ATP hydrolysis by CysD. The sequence is that of Sulfate adenylyltransferase subunit 1 from Shigella sonnei (strain Ss046).